The chain runs to 129 residues: MFVWKDEFELGIDKIDNEHRKLFEIANKGYELLKNEFYVDKYDKIMDIIVELKEYAEFHFSEEEDYLASIGYKKLFTHKLEHDSFIKKVESFNIKEIDYDQDKYIQEMLDFVVTWIKEHILEKDREYID.

Histidine 19, histidine 59, glutamate 63, histidine 78, histidine 82, histidine 119, and aspartate 124 together coordinate Fe cation.

The protein belongs to the hemerythrin family. Monomer.

Functionally, oxygen-binding protein. May be involved in a storage mechanism or for delivery to oxygen-requiring enzymes. The oxygen-binding site contains two iron atoms. The polypeptide is Bacteriohemerythrin (Clostridium acetobutylicum (strain ATCC 824 / DSM 792 / JCM 1419 / IAM 19013 / LMG 5710 / NBRC 13948 / NRRL B-527 / VKM B-1787 / 2291 / W)).